The primary structure comprises 260 residues: MIHDPNDAGLPDQLPTPSSEAENSPAGDTTPPEEALHRRRIRSFVTRAGRVSTGQRRAMDELGPRFVVPFAPQQPDWNSVFGREAPRVLEIGFGMGATTAEIASHRPDEDFLGVEVHEPGVGALLKLMGEQNLSNIRIIQHDAVEVLEQMIAPDSLDGVHIFFPDPWHKARHHKRRLIQPKFVALLVSRLKPGAYLHCATDWQNYAEQMLEVLGAEPSLKNTADGYAPRPEYRPVTKFERRGLRLGHGVWDLVFRKRGAG.

Positions 1–37 (MIHDPNDAGLPDQLPTPSSEAENSPAGDTTPPEEALH) are disordered. E90, E115, D142, and D165 together coordinate S-adenosyl-L-methionine. Residue D165 is part of the active site. Substrate contacts are provided by residues K169, D201, and 236-239 (TKFE).

This sequence belongs to the class I-like SAM-binding methyltransferase superfamily. TrmB family.

The catalysed reaction is guanosine(46) in tRNA + S-adenosyl-L-methionine = N(7)-methylguanosine(46) in tRNA + S-adenosyl-L-homocysteine. The protein operates within tRNA modification; N(7)-methylguanine-tRNA biosynthesis. Catalyzes the formation of N(7)-methylguanine at position 46 (m7G46) in tRNA. The sequence is that of tRNA (guanine-N(7)-)-methyltransferase from Paraburkholderia xenovorans (strain LB400).